Here is a 194-residue protein sequence, read N- to C-terminus: MTIKLIVGLANPGAEYAATRHNAGAWFVDLLAERLRAPLREEAKFFGYTSRVTLGSEDVRLLVPTTFMNLSGKAVAAMASFFRINPDEILVAHDELDLPPGVAKFKLGGGHGGHNGLKDIISKLGNNPNFHRLRIGIGHPGDKNKVVGFVLGKPPVSEQKLIDEAIDEAARCTEMWFTDGLTKATNRLHAFKAQ.

Tyrosine 16 lines the tRNA pocket. Histidine 21 serves as the catalytic Proton acceptor. The tRNA site is built by phenylalanine 67, asparagine 69, and asparagine 115.

It belongs to the PTH family. As to quaternary structure, monomer.

The protein resides in the cytoplasm. The enzyme catalyses an N-acyl-L-alpha-aminoacyl-tRNA + H2O = an N-acyl-L-amino acid + a tRNA + H(+). Its function is as follows. Hydrolyzes ribosome-free peptidyl-tRNAs (with 1 or more amino acids incorporated), which drop off the ribosome during protein synthesis, or as a result of ribosome stalling. Functionally, catalyzes the release of premature peptidyl moieties from peptidyl-tRNA molecules trapped in stalled 50S ribosomal subunits, and thus maintains levels of free tRNAs and 50S ribosomes. This chain is Peptidyl-tRNA hydrolase, found in Shigella flexneri.